The sequence spans 175 residues: Ferritin light chain (175 aa).

Ser2 is subject to N-acetylserine. One can recognise a Ferritin-like diiron domain in the interval 7-156; it reads QNYSTEVEAA…DHLTNLRRLA (150 aa). Glu54, Glu58, Glu61, and Glu64 together coordinate Fe cation.

Belongs to the ferritin family. In terms of assembly, oligomer of 24 subunits. There are two types of subunits: L (light) chain and H (heavy) chain. The major chain can be light or heavy, depending on the species and tissue type. The functional molecule forms a roughly spherical shell with a diameter of 12 nm and contains a central cavity into which the insoluble mineral iron core is deposited. Interacts with NCOA4.

The protein resides in the cytoplasmic vesicle. It localises to the autophagosome. The protein localises to the cytoplasm. Its subcellular location is the autolysosome. Stores iron in a soluble, non-toxic, readily available form. Important for iron homeostasis. Iron is taken up in the ferrous form and deposited as ferric hydroxides after oxidation. Also plays a role in delivery of iron to cells. Mediates iron uptake in capsule cells of the developing kidney. Delivery to lysosomes by the cargo receptor NCOA4 for autophagic degradation and release or iron. The protein is Ferritin light chain (FTL) of Bos taurus (Bovine).